Reading from the N-terminus, the 551-residue chain is Cytochrome P450 monooxygenase sdnQ (551 aa).

Residues Met1–Thr23 are disordered. Residues Ser8–Thr23 show a composition bias toward polar residues. N-linked (GlcNAc...) asparagine glycosylation is present at Asn21. A helical transmembrane segment spans residues Cys41 to Tyr57. Cys491 is a heme binding site.

This sequence belongs to the cytochrome P450 family. The cofactor is heme.

It is found in the membrane. It participates in antibiotic biosynthesis. Its function is as follows. Cytochrome P450 monooxygenase; part of the gene cluster that mediates the biosynthesis of sordarin and hypoxysordarin, glycoside antibiotics with a unique tetracyclic diterpene aglycone structure. First, the geranylgeranyl diphosphate synthase sdnC constructs GGDP from farnesyl diphosphate and isopentenyl diphosphate. The diterpene cyclase sdnA then catalyzes the cyclization of GGDP to afford cycloaraneosene. Cycloaraneosene is then hydroxylated four times by the putative cytochrome P450 monooxygenases sdnB, sdnE, sdnF and sdnH to give a hydroxylated cycloaraneosene derivative such as cycloaraneosene-8,9,13,19-tetraol. Although the order of the hydroxylations is unclear, at least C8, C9 and C13 of the cycloaraneosene skeleton are hydroxylated before the sordaricin formation. Dehydration of the 13-hydroxy group of the hydroxylated cycloaraneosene derivative might be catalyzed by an unassigned hypothetical protein such as sdnG and sdnP to construct the cyclopentadiene moiety. The FAD-dependent oxidoreductase sdnN is proposed to catalyze the oxidation at C9 of the hydroxylated cycloaraneosene derivative and also catalyze the Baeyer-Villiger oxidation to give the lactone intermediate. The presumed lactone intermediate would be hydrolyzed to give an acrolein moiety and a carboxylate moiety. Then, [4+2]cycloaddition would occur between the acrolein moiety and the cyclopentadiene moiety to give sordaricin. SdnN might also be involved in the [4+2]cycloaddition after the hypothesized oxidation to accommodate the oxidized product and prompt the [4+2]cycloaddition. GDP-6-deoxy-D-altrose may be biosynthesized from GDP-D-mannose by the putative GDP-mannose-4,6-dehydratase sdnI and the short-chain dehydrogenase sdnK. The glycosyltransferase sdnJ catalyzes the attachment of 6-deoxy-D-altrose onto the 19-hydroxy group of sordaricin to give 4'-O-demethylsordarin. The methyltransferase sdnD would complete the biosynthesis of sordarin. Sordarin can be further modified into hypoxysordarin. The unique acyl chain at the 3'-hydroxy group of hypoxysordarin would be constructed by an iterative type I PKS sdnO and the trans-acting polyketide methyltransferase sdnL. SdnL would be responsible for the introduction of an alpha-methyl group of the polyketide chain. Alternatively, the beta-lactamase-like protein sdnR might be responsible for the cleavage and transfer of the polyketide chain from the PKS sdnO to sordarin. Two putative cytochrome P450 monooxygenases, sdnQ and sdnT, might catalyze the epoxidations of the polyketide chain to complete the biosynthesis of hypoxysordarin. Transcriptional regulators sdnM and sdnS are presumably encoded for the transcriptional regulation of the expression of the sdn gene cluster. This is Cytochrome P450 monooxygenase sdnQ from Sordaria araneosa (Pleurage araneosa).